A 1030-amino-acid polypeptide reads, in one-letter code: Translation initiation factor IF-2 (1030 aa).

Composition is skewed to low complexity over residues 56–69 and 111–132; these read APSEPVAAASAADS and PNIVAPPRRPAAANEPAKAPIK. Disordered regions lie at residues 56–361 and 394–434; these read APSE…KRRQ and SKPK…REQK. Residues 134–144 show a composition bias toward basic and acidic residues; the sequence is ARPEKSAEKPE. Residues 154 to 164 are compositionally biased toward low complexity; the sequence is AASAEPAKSPS. Residues 188–206 show a composition bias toward basic and acidic residues; the sequence is LLRKPEIVRRSEAKPERTS. Over residues 259 to 273 the composition is skewed to low complexity; the sequence is VAASASGVPAAASRV. One can recognise a tr-type G domain in the interval 522 to 695; it reads TRPPVVTVMG…LLVTEVEELV (174 aa). The G1 stretch occupies residues 531 to 538; the sequence is GHVDHGKT. 531-538 provides a ligand contact to GTP; sequence GHVDHGKT. The interval 556–560 is G2; it reads GITQH. Residues 581 to 584 are G3; that stretch reads DTPG. Residues 581–585 and 635–638 each bind GTP; these read DTPGH and NKCD. Residues 635-638 are G4; sequence NKCD. A G5 region spans residues 671–673; the sequence is SAI.

Belongs to the TRAFAC class translation factor GTPase superfamily. Classic translation factor GTPase family. IF-2 subfamily.

It is found in the cytoplasm. Functionally, one of the essential components for the initiation of protein synthesis. Protects formylmethionyl-tRNA from spontaneous hydrolysis and promotes its binding to the 30S ribosomal subunits. Also involved in the hydrolysis of GTP during the formation of the 70S ribosomal complex. The polypeptide is Translation initiation factor IF-2 (Synechococcus elongatus (strain ATCC 33912 / PCC 7942 / FACHB-805) (Anacystis nidulans R2)).